The sequence spans 566 residues: Malate synthase, glyoxysomal (566 aa).

Residue Arg179 is the Proton acceptor of the active site. Catalysis depends on Asp465, which acts as the Proton donor. A Microbody targeting signal motif is present at residues 564-566; that stretch reads SRL.

The protein belongs to the malate synthase family.

It is found in the glyoxysome. The catalysed reaction is glyoxylate + acetyl-CoA + H2O = (S)-malate + CoA + H(+). The protein operates within carbohydrate metabolism; glyoxylate cycle; (S)-malate from isocitrate: step 2/2. In Raphanus sativus (Radish), this protein is Malate synthase, glyoxysomal (MLS).